The chain runs to 569 residues: MKLCRWYIALFLLPVCLQSQKLPTRDEELFQMQIRDKALFHDSSVIPDGAEISGYLFRDNPKRYFFVVEEDNTPLSVIVTPCDAPLEWKLTLQELPEEASGEGSGEPEPLEEQKQQIVNEEGTELFSYKGNDVEYFVSSSSPSGLYQLELISTEKDTHFKVYATTTPESDQPYPELPYDPRVDVTSLGRTTITLAWKPTPTSSVMKQPIQYCVVINKEHNFKSICAVEAKMIADDAFMMAPKPGIDFNPFDFAHFGFQSDNSAGKDRNFMPKVSSSKMLRQITKPKVDIQKFCIGNKNIFTVSDLKPDTQYYFDVFAVNAVTNMSTAYVGTFARTKEEAKQKTVELKDGKVTDVFIKRKGTKFLRFSPVSSHQKVTFSVHSCLDAIQIQVRRDGKLLLSQSVEGVRQFQLRGKPKAKYLIRLKGSKKGASMLKILATSKFNKQPFPSLPEDTRIKAFDKLRTCSSATVAWLGTQERNKFCIYKKEVDDDYTEEHKKRDQNQCLGPDTRKKSEKVLCKYFHSQNIHKAVTTETIKGLQPGKSYMLDVYVMGHAGHSVKYQSKIVKTRKFC.

Positions Met-1–Ser-19 are cleaved as a signal peptide. 2 consecutive Fibronectin type-III domains span residues Asn-261–Phe-332 and Pro-446–Thr-565. N-linked (GlcNAc...) asparagine glycosylation occurs at Asn-323.

It localises to the secreted. Its function is as follows. Secretory protein that plays a role in various cellular processes. Acts as a chemorepellent acting on gonadotropin-releasing hormone (GnRH) expressing neurons regulating their migration to the hypothalamus. Also promotes neuron migration, growth and survival as well as neurite outgrowth and is involved in the development of the olfactory system. May also act through the regulation of growth factors activity and downstream signaling. Also regulates extracellular matrix assembly and cell adhesiveness. Promotes endothelial cell survival, vessel formation and plays an important role in the process of revascularization through NOS3-dependent mechanisms. This Xenopus laevis (African clawed frog) protein is Protein NDNF (ndnf).